A 364-amino-acid chain; its full sequence is Fructose-bisphosphate aldolase A (364 aa).

The residue at position 5 (Tyr-5) is a Phosphotyrosine. Thr-9 is modified (phosphothreonine). Ser-36 and Ser-39 each carry phosphoserine. N6-acetyllysine; alternate is present on Lys-42. A Glycyl lysine isopeptide (Lys-Gly) (interchain with G-Cter in SUMO1); alternate cross-link involves residue Lys-42. A Glycyl lysine isopeptide (Lys-Gly) (interchain with G-Cter in SUMO2); alternate cross-link involves residue Lys-42. Arg-43 lines the beta-D-fructose 1,6-bisphosphate pocket. Residue Ser-46 is modified to Phosphoserine. At Lys-99 the chain carries N6-(2-hydroxyisobutyryl)lysine. Lys-108 carries the N6-acetyllysine modification. Lys-111 carries the post-translational modification N6-acetyllysine; alternate. Position 111 is an N6-malonyllysine; alternate (Lys-111). Residue Ser-132 is modified to Phosphoserine. Lys-147 is subject to N6-(2-hydroxyisobutyryl)lysine. Catalysis depends on Glu-188, which acts as the Proton acceptor. Catalysis depends on Lys-230, which acts as the Schiff-base intermediate with dihydroxyacetone-P. Phosphoserine is present on Ser-272. Beta-D-fructose 1,6-bisphosphate contacts are provided by residues 272–274 (SGG), Ser-301, and Arg-304. Lys-312 carries the post-translational modification N6-malonyllysine. Residue Lys-330 is modified to N6-acetyllysine.

The protein belongs to the class I fructose-bisphosphate aldolase family. In terms of assembly, homotetramer. Interacts with SNX9 and WAS. Interacts with FBP2; the interaction blocks FBP2 inhibition by physiological concentrations of AMP and reduces inhibition by Ca(2+).

Its subcellular location is the cytoplasm. It localises to the myofibril. The protein resides in the sarcomere. It is found in the i band. The protein localises to the m line. It carries out the reaction beta-D-fructose 1,6-bisphosphate = D-glyceraldehyde 3-phosphate + dihydroxyacetone phosphate. The protein operates within carbohydrate degradation; glycolysis; D-glyceraldehyde 3-phosphate and glycerone phosphate from D-glucose: step 4/4. Functionally, catalyzes the reversible conversion of beta-D-fructose 1,6-bisphosphate (FBP) into two triose phosphate and plays a key role in glycolysis and gluconeogenesis. In addition, may also function as scaffolding protein. The chain is Fructose-bisphosphate aldolase A (ALDOA) from Pan troglodytes (Chimpanzee).